The sequence spans 364 residues: Caffeic acid 3-O-methyltransferase 2 (364 aa).

A substrate-binding site is contributed by 129–135 (MNQDKVL). The substrate binding stretch occupies residues 161-179 (AFEYHGTDPRFNKVFNKGM). The S-adenosyl-L-methionine site is built by Gly207, Asp230, Asp250, Met251, and Lys264. Residue His268 is the Proton acceptor of the active site.

Belongs to the class I-like SAM-binding methyltransferase superfamily. Cation-independent O-methyltransferase family. COMT subfamily. Homodimer.

It carries out the reaction (E)-caffeate + S-adenosyl-L-methionine = (E)-ferulate + S-adenosyl-L-homocysteine + H(+). It functions in the pathway aromatic compound metabolism; phenylpropanoid biosynthesis. Catalyzes the conversion of caffeic acid to ferulic acid and of 5-hydroxyferulic acid to sinapic acid. The resulting products may subsequently be converted to the corresponding alcohols that are incorporated into lignins. The polypeptide is Caffeic acid 3-O-methyltransferase 2 (OMT2) (Populus tremuloides (Quaking aspen)).